The chain runs to 334 residues: N-acetyl-gamma-glutamyl-phosphate reductase (334 aa).

The active site involves Cys154.

It belongs to the NAGSA dehydrogenase family. Type 1 subfamily.

It localises to the cytoplasm. It carries out the reaction N-acetyl-L-glutamate 5-semialdehyde + phosphate + NADP(+) = N-acetyl-L-glutamyl 5-phosphate + NADPH + H(+). It functions in the pathway amino-acid biosynthesis; L-arginine biosynthesis; N(2)-acetyl-L-ornithine from L-glutamate: step 3/4. In terms of biological role, catalyzes the NADPH-dependent reduction of N-acetyl-5-glutamyl phosphate to yield N-acetyl-L-glutamate 5-semialdehyde. The polypeptide is N-acetyl-gamma-glutamyl-phosphate reductase (Escherichia coli (strain K12)).